The primary structure comprises 208 residues: Large ribosomal subunit protein bL25 (208 aa).

The interval 163–208 (DYSYNHEPDEVVASILPPQKQEETEAESAAQDVEEPEKGTEEEKEE) is disordered. A compositionally biased stretch (basic and acidic residues) spans 198–208 (PEKGTEEEKEE).

This sequence belongs to the bacterial ribosomal protein bL25 family. CTC subfamily. Part of the 50S ribosomal subunit; part of the 5S rRNA/L5/L18/L25 subcomplex. Contacts the 5S rRNA. Binds to the 5S rRNA independently of L5 and L18.

In terms of biological role, this is one of the proteins that binds to the 5S RNA in the ribosome where it forms part of the central protuberance. This chain is Large ribosomal subunit protein bL25, found in Bacillus licheniformis (strain ATCC 14580 / DSM 13 / JCM 2505 / CCUG 7422 / NBRC 12200 / NCIMB 9375 / NCTC 10341 / NRRL NRS-1264 / Gibson 46).